The sequence spans 235 residues: Glucosamine-6-phosphate deaminase (235 aa).

The Proton acceptor; for enolization step role is filled by D62. The active-site For ring-opening step is the N128. The Proton acceptor; for ring-opening step role is filled by H130. E135 serves as the catalytic For ring-opening step.

The protein belongs to the glucosamine/galactosamine-6-phosphate isomerase family. NagB subfamily.

It carries out the reaction alpha-D-glucosamine 6-phosphate + H2O = beta-D-fructose 6-phosphate + NH4(+). It participates in amino-sugar metabolism; N-acetylneuraminate degradation; D-fructose 6-phosphate from N-acetylneuraminate: step 5/5. In terms of biological role, catalyzes the reversible isomerization-deamination of glucosamine 6-phosphate (GlcN6P) to form fructose 6-phosphate (Fru6P) and ammonium ion. The sequence is that of Glucosamine-6-phosphate deaminase from Latilactobacillus sakei subsp. sakei (strain 23K) (Lactobacillus sakei subsp. sakei).